Here is a 53-residue protein sequence, read N- to C-terminus: Conotoxin Bu27 (53 aa).

Residues 1–12 constitute a propeptide that is removed on maturation; the sequence is ASDGRNAVVHER. Residue proline 14 is modified to 4-hydroxyproline. At glutamate 15 the chain carries 4-carboxyglutamate. 2 O-linked (HexNAc...) threonine glycosylation sites follow: threonine 19 and threonine 21. 6 positions are modified to 4-hydroxyproline: proline 29, proline 34, proline 35, proline 43, proline 44, and proline 48. Residue proline 48 is modified to Proline amide. Residues 49–53 constitute a propeptide that is removed on maturation; sequence GRRND.

Belongs to the conotoxin A superfamily. Post-translationally, contains 3 disulfide bonds. In terms of tissue distribution, expressed by the venom duct.

It is found in the secreted. Probable neurotoxin with ion channel inhibitor activity. The chain is Conotoxin Bu27 from Conus bullatus (Bubble cone).